The primary structure comprises 648 residues: MRIAKILLPVAKLFPLDYLIPEDLELNIGDLVVVPFRNKELTGIVWELVSNSEAKKIKTIRVKVPLNLNITSEVLELIKWMSSYYMSELGSIAKLVLPMDIAEKPIKVKEQKVNNNFVLPDLSEEQKQAVTILNESNKPTLVKGVTGSGKTEIYFHLIADYLAKGKQVLVMLPEIALSTQIINRFIERFGFEPIIWNSSVTKAHKKMILRGILSDKVKVVIGARSSLFLPFKNLGLIVIDEEHDDSYKQDDGILYNARDTAIVRGTFDKAQIVLCSATPSIETIHNIEIGKYQLVTLVNRYKNVDLPNIEIIDMTKEKLSKNSYLSKLLIEAIKGNLDNKKQVLLFLNRRGYAPLMLCKACGYRLTCKFCSSWMVVHKATKKLECHHCGYQSKIFSSCPECLEDETLTICGPGIERIEEEAKALFPESKIAVISKDHAKSPEKIAQLLHQMENLEIDILIGTQIITKGYHFPNLTLVGVIDADLGSNNADLRASERTFQLLHQVGGRAGRGDSKGVVYLQSYYPDNTIFSYVKAGDEDSFFANELEIRKSADMPPFSKTASVILSGSSEAKILEIARDMVRIAPKANVKILGPASSLMSKLAGKYRYRILIIANKKFNLQKYLKFWLSLIKIPSFCHLKIDIDPKSFY.

In terms of domain architecture, Helicase ATP-binding spans 131 to 297 (TILNESNKPT…EIGKYQLVTL (167 aa)). ATP is bound at residue 144–151 (GVTGSGKT). The DEAH box motif lies at 240 to 243 (DEEH). Zn(2+) contacts are provided by Cys358, Cys361, Cys367, Cys370, Cys385, Cys388, Cys398, and Cys401. The region spanning 393–548 (KIFSSCPECL…SFFANELEIR (156 aa)) is the Helicase C-terminal domain.

It belongs to the helicase family. PriA subfamily. Component of the replication restart primosome. Requires Zn(2+) as cofactor.

It carries out the reaction Couples ATP hydrolysis with the unwinding of duplex DNA by translocating in the 3'-5' direction.. It catalyses the reaction ATP + H2O = ADP + phosphate + H(+). Initiates the restart of stalled replication forks, which reloads the replicative helicase on sites other than the origin of replication. Recognizes and binds to abandoned replication forks and remodels them to uncover a helicase loading site. Promotes assembly of the primosome at these replication forks. In Rickettsia conorii (strain ATCC VR-613 / Malish 7), this protein is Replication restart protein PriA.